The following is a 356-amino-acid chain: Histidinol-phosphate aminotransferase (356 aa).

Residue Lys-214 is modified to N6-(pyridoxal phosphate)lysine.

This sequence belongs to the class-II pyridoxal-phosphate-dependent aminotransferase family. Histidinol-phosphate aminotransferase subfamily. In terms of assembly, homodimer. Pyridoxal 5'-phosphate serves as cofactor.

It catalyses the reaction L-histidinol phosphate + 2-oxoglutarate = 3-(imidazol-4-yl)-2-oxopropyl phosphate + L-glutamate. It participates in amino-acid biosynthesis; L-histidine biosynthesis; L-histidine from 5-phospho-alpha-D-ribose 1-diphosphate: step 7/9. In Escherichia coli O7:K1 (strain IAI39 / ExPEC), this protein is Histidinol-phosphate aminotransferase.